Consider the following 1491-residue polypeptide: Chromosome partition protein MukB (1491 aa).

Position 34-41 (34-41 (GGNGAGKS)) interacts with ATP. Coiled coils occupy residues 302 to 450 (LIEQ…LKAE), 490 to 600 (ARSE…RFES), 781 to 806 (RAAR…AKAS), 836 to 1109 (EQAL…DLRT), and 1210 to 1239 (VEAI…ISSD). The interval 667-784 (PGGSNDPRLK…AIPLFGRAAR (118 aa)) is flexible hinge. A disordered region spans residues 1059-1080 (QRRRDELQERLHTSRSRKSEYE).

It belongs to the SMC family. MukB subfamily. In terms of assembly, homodimerization via its hinge domain. Binds to DNA via its C-terminal region. Interacts, and probably forms a ternary complex, with MukE and MukF via its C-terminal region. The complex formation is stimulated by calcium or magnesium. Interacts with tubulin-related protein FtsZ.

It localises to the cytoplasm. The protein localises to the nucleoid. In terms of biological role, plays a central role in chromosome condensation, segregation and cell cycle progression. Functions as a homodimer, which is essential for chromosome partition. Involved in negative DNA supercoiling in vivo, and by this means organize and compact chromosomes. May achieve or facilitate chromosome segregation by condensation DNA from both sides of a centrally located replisome during cell division. In Vibrio cholerae serotype O1 (strain ATCC 39315 / El Tor Inaba N16961), this protein is Chromosome partition protein MukB.